The primary structure comprises 194 residues: Crossover junction endodeoxyribonuclease RuvC (194 aa).

Active-site residues include Asp7, Glu68, and Asp141. Mg(2+) contacts are provided by Asp7, Glu68, and Asp141. The segment at 162–194 (GGEREQHLTAAQRQWAEAAQNSTRRRKNSDRGM) is disordered. Over residues 184-194 (TRRRKNSDRGM) the composition is skewed to basic residues.

It belongs to the RuvC family. As to quaternary structure, homodimer which binds Holliday junction (HJ) DNA. The HJ becomes 2-fold symmetrical on binding to RuvC with unstacked arms; it has a different conformation from HJ DNA in complex with RuvA. In the full resolvosome a probable DNA-RuvA(4)-RuvB(12)-RuvC(2) complex forms which resolves the HJ. The cofactor is Mg(2+).

Its subcellular location is the cytoplasm. It catalyses the reaction Endonucleolytic cleavage at a junction such as a reciprocal single-stranded crossover between two homologous DNA duplexes (Holliday junction).. The RuvA-RuvB-RuvC complex processes Holliday junction (HJ) DNA during genetic recombination and DNA repair. Endonuclease that resolves HJ intermediates. Cleaves cruciform DNA by making single-stranded nicks across the HJ at symmetrical positions within the homologous arms, yielding a 5'-phosphate and a 3'-hydroxyl group; requires a central core of homology in the junction. The consensus cleavage sequence is 5'-(A/T)TT(C/G)-3'. Cleavage occurs on the 3'-side of the TT dinucleotide at the point of strand exchange. HJ branch migration catalyzed by RuvA-RuvB allows RuvC to scan DNA until it finds its consensus sequence, where it cleaves and resolves the cruciform DNA. The chain is Crossover junction endodeoxyribonuclease RuvC from Bifidobacterium longum subsp. infantis (strain ATCC 15697 / DSM 20088 / JCM 1222 / NCTC 11817 / S12).